A 583-amino-acid polypeptide reads, in one-letter code: Septin-9 (583 aa).

An N-acetylmethionine modification is found at methionine 1. A compositionally biased stretch (polar residues) spans 1 to 14 (MKKSYSGVTRTSSG). Residues 1–49 (MKKSYSGVTRTSSGRLRRLADPTGPALKRSFEVEEIEPPNSTPPRRVQT) are disordered. At serine 30 the chain carries Phosphoserine. Threonine 42 and threonine 49 each carry phosphothreonine. Lysine 62 is subject to N6-acetyllysine. Positions 79 to 105 (DSLSQRSPKPSLRRVELAGAKAPEPMS) are disordered. Phosphoserine occurs at positions 82, 85, and 89. The residue at position 143 (threonine 143) is a Phosphothreonine. The segment at 166-252 (VETPASKIPE…TPSCVGDMAD (87 aa)) is disordered. The span at 204-221 (LPSQTLENSEAPMSQLQS) shows a compositional bias: polar residues. Tyrosine 276 is modified (phosphotyrosine). A Septin-type G domain is found at 293–565 (QGFEFNIMVV…EAYRVKRLNE (273 aa)). A G1 motif region spans residues 303–310 (GQSGLGKS). 303–310 (GQSGLGKS) is a GTP binding site. A phosphoserine mark is found at serine 325 and serine 330. Residues threonine 337, glycine 363, 443-451 (KADTLTLEE), glycine 499, and arginine 514 each bind GTP. A G3 motif region spans residues 360–363 (DTPG). The segment at 442–445 (AKAD) is G4 motif.

Belongs to the TRAFAC class TrmE-Era-EngA-EngB-Septin-like GTPase superfamily. Septin GTPase family. In terms of assembly, septins polymerize into heterooligomeric protein complexes that form filaments, and associate with cellular membranes, actin filaments, and microtubules. GTPase activity is required for filament formation. Interacts with SEPTIN2, SEPTIN6, SEPTIN7, SEPTIN11 and SEPTIN14. Interacts with RTKN and ARHGEF18. As to expression, expressed in all tissues examined except muscle. Isoforms are differentially expressed in testes, kidney, liver, heart, spleen and brain.

It localises to the cytoplasm. The protein resides in the cytoskeleton. Filament-forming cytoskeletal GTPase. May play a role in cytokinesis (Potential). The protein is Septin-9 of Mus musculus (Mouse).